Consider the following 143-residue polypeptide: MSSQQNQNRQGEQQEQGYMEAAKEKVVNAWESTKETLSSTAQAAAEKTAEFRDSAGETIRDLTGQAQEKGQEFKERAGEKAEETKQRAGEKMDETKQRAGEMRENAGQKMEEYKQQGKGKAEELRDTAAEKLHQAGEKVKGRD.

Low complexity predominate over residues 1–17 (MSSQQNQNRQGEQQEQG). The interval 1–143 (MSSQQNQNRQ…QAGEKVKGRD (143 aa)) is disordered. Tandem repeats lie at residues 47–57 (KTAEFRDSAGE), 69–79 (KGQEFKERAGE), 80–90 (KAEETKQRAGE), and 91–101 (KMDETKQRAGE). Composition is skewed to basic and acidic residues over residues 47–60 (KTAE…ETIR) and 69–143 (KGQE…KGRD). The segment at 47–101 (KTAEFRDSAGETIRDLTGQAQEKGQEFKERAGEKAEETKQRAGEKMDETKQRAGE) is 4 X 11 AA approximate repeats.

The protein belongs to the LEA type 4 family.

May be involved in defense against water stress. This is Late embryogenesis abundant protein 1 from Aphelenchoides avenae (Mycophagous nematode worm).